Consider the following 226-residue polypeptide: Deoxyribose-phosphate aldolase (226 aa).

The active-site Proton donor/acceptor is the Asp-94. Catalysis depends on Lys-156, which acts as the Schiff-base intermediate with acetaldehyde. Lys-185 functions as the Proton donor/acceptor in the catalytic mechanism.

The protein belongs to the DeoC/FbaB aldolase family. DeoC type 1 subfamily.

It localises to the cytoplasm. The enzyme catalyses 2-deoxy-D-ribose 5-phosphate = D-glyceraldehyde 3-phosphate + acetaldehyde. Its pathway is carbohydrate degradation; 2-deoxy-D-ribose 1-phosphate degradation; D-glyceraldehyde 3-phosphate and acetaldehyde from 2-deoxy-alpha-D-ribose 1-phosphate: step 2/2. Catalyzes a reversible aldol reaction between acetaldehyde and D-glyceraldehyde 3-phosphate to generate 2-deoxy-D-ribose 5-phosphate. The sequence is that of Deoxyribose-phosphate aldolase from Burkholderia orbicola (strain MC0-3).